Reading from the N-terminus, the 85-residue chain is Cell division topological specificity factor (85 aa).

This sequence belongs to the MinE family.

Prevents the cell division inhibition by proteins MinC and MinD at internal division sites while permitting inhibition at polar sites. This ensures cell division at the proper site by restricting the formation of a division septum at the midpoint of the long axis of the cell. The protein is Cell division topological specificity factor of Shewanella amazonensis (strain ATCC BAA-1098 / SB2B).